The primary structure comprises 466 residues: Acetylcholine-gated chloride channel subunit acc-1 (466 aa).

The first 24 residues, 1–24 (MSHPGWIMVSFLTELLSQSSKGIA), serve as a signal peptide directing secretion. The Extracellular segment spans residues 25 to 242 (QSLDNCANDT…FVFERRYGWY (218 aa)). N-linked (GlcNAc...) asparagine glycans are attached at residues N32, N102, and N143. C158 and C172 form a disulfide bridge. N211 carries an N-linked (GlcNAc...) asparagine glycan. A helical transmembrane segment spans residues 243–263 (VLQGYIPTMVTIVISWISFYL). Over 264-272 (GPRAIPART) the chain is Cytoplasmic. A helical membrane pass occupies residues 273-290 (MLGVNSLLAMTFQFGNII). Residues 291 to 304 (RNLPRVSYVKAIDV) are Extracellular-facing. Residues 305 to 325 (WMLSGMLFIFLSLLELAVVGF) form a helical membrane-spanning segment. The Cytoplasmic segment spans residues 326–427 (MSRNEGLPPK…MRELRPETVD (102 aa)). The interval 333–352 (PPKVKKRKRQEDDDEGFSWK) is disordered. The helical transmembrane segment at 428 to 448 (FYSAIFFPTAYMLFNISYWSF) threads the bilayer. Topologically, residues 449 to 466 (YLTSLSEYFDEDVNIDQP) are extracellular.

The protein belongs to the ligand-gated ion channel (TC 1.A.9) family. In terms of assembly, homopentamer (in vitro). Forms heteropentamers composed of acc-1 and acc-4 or acc-1 and acc-3. Both homopentamers and heteropentamers form functional ion channels. Expressed in a subset of cholinergic motor neurons including cholinergic motor neurons in the ventral cord, the retrovesicular ganglion and in head neurons such as the SMD, RMD motor neurons, the AVA and AVE command interneurons and the SAA neurons. Also expressed in a small number of glutamatergic neurons including the pharyngeal neurons MI and M3, the PLM neurons and a pair of neurons in the lateral ganglion.

The protein localises to the cell membrane. Functionally, acetylcholine-gated chloride channel subunit. Forms functional homopentameric (in vitro) and functional heteropentameric ion channels with acc-3 and acc-4 ion channel subunits. Currents in channels are triggered in response to acetylcholine, but not in response to GABA, glutamate, glycine, histamine or dopamine. The polypeptide is Acetylcholine-gated chloride channel subunit acc-1 (Caenorhabditis elegans).